A 450-amino-acid chain; its full sequence is BAG family molecular chaperone regulator 5 (450 aa).

BAG domains are found at residues 9–86, 95–167, 182–260, 275–350, and 365–442; these read SIKR…EQNA, EAIF…ESCA, SVSK…DLDE, SILK…DLKE, and EHQS…YYLD.

Binds to the ATPase domain of HSP/HSC70 chaperones.

In terms of biological role, co-chaperone for HSP/HSP70 proteins. It functions as a nucleotide-exchange factor promoting the release of ADP from HSP70, thereby activating HSP70-mediated protein refolding. This is BAG family molecular chaperone regulator 5 (BAG5) from Gallus gallus (Chicken).